We begin with the raw amino-acid sequence, 555 residues long: DNA repair and recombination protein rhm52 (555 aa).

A DNA-binding region spans residues 148–152 (KRALR). 2 disordered regions span residues 197-232 (VVAE…DSFD) and 251-555 (HPDE…MKLN). Residues 260–276 (NSHASGSSGNTGASTTN) are compositionally biased toward low complexity. Composition is skewed to polar residues over residues 283 to 300 (SGNQ…SRMN) and 312 to 334 (TPNH…QNNH). Low complexity-rich tracts occupy residues 354-375 (NNNN…GPQQ) and 382-404 (NGAA…AVAR). Residues 468 to 478 (DNPSNNAGNGV) show a composition bias toward polar residues. Residues 479–490 (QNQPQKPQPSQQ) are compositionally biased toward low complexity. Residues 491-500 (RGSILNPQFD) show a composition bias toward polar residues. Residues 536-547 (PNGTSNGNGTPG) show a composition bias toward low complexity.

It belongs to the RAD52 family. As to quaternary structure, part of a complex that includes RAD51, RAD52 and RAD59.

It is found in the nucleus. Its function is as follows. Involved in DNA double-strand break (DSB) repair and recombination. Promotes the annealing of complementary single-stranded DNA and by stimulation of the RAD51 recombinase. The sequence is that of DNA repair and recombination protein rhm52 (RHM52) from Pyricularia oryzae (strain 70-15 / ATCC MYA-4617 / FGSC 8958) (Rice blast fungus).